The primary structure comprises 33 residues: Glucagon-2 (33 aa).

This sequence belongs to the glucagon family.

It is found in the secreted. Its function is as follows. Promotes hydrolysis of glycogen and lipids, and raises the blood sugar level. This Oreochromis niloticus (Nile tilapia) protein is Glucagon-2 (gcg2).